The sequence spans 296 residues: Glycine and tyrosine-rich protein (296 aa).

A signal peptide spans 1–18; that stretch reads MKVLVTALIISFSTAVLT. Residues 157–280 form a disordered region; sequence MESRLRPQAT…NQPEETPAPN (124 aa). Positions 172–264 are enriched in low complexity; that stretch reads TGGQPSTGGK…STGGQPSTGG (93 aa).

Component of the acid-insoluble and acid-soluble organic matrix of calcified layers of the shell (at protein level).

The protein localises to the secreted. This Lottia gigantea (Giant owl limpet) protein is Glycine and tyrosine-rich protein.